The following is a 234-amino-acid chain: HTH-type transcriptional regulator ArcR (234 aa).

40–129 (VRHYTKGQVI…MAFLCKANDD (90 aa)) contributes to the a nucleoside 3',5'-cyclic phosphate binding site. The HTH crp-type domain maps to 155 to 228 (KFAKDRIIKL…HKNWLVSKHL (74 aa)). Positions 188–207 (IQLMSDMAGISRETAGHIIH) form a DNA-binding region, H-T-H motif.

The protein localises to the cytoplasm. Its function is as follows. Positively regulates the expression of the arcABDCR operon under anaerobic conditions, thus playing an essential role in arginine catabolism. May also control the expression of genes encoding proteins which are involved in anaerobic metabolism. Can bind cyclic AMP. This Staphylococcus aureus (strain MSSA476) protein is HTH-type transcriptional regulator ArcR (arcR).